Here is a 321-residue protein sequence, read N- to C-terminus: Thioredoxin reductase (321 aa).

36 to 43 (TGMEKGGQ) contacts FAD. The cysteines at positions 136 and 139 are disulfide-linked. Position 287 to 296 (287 to 296 (DVMDHIYRQA)) interacts with FAD.

It belongs to the class-II pyridine nucleotide-disulfide oxidoreductase family. As to quaternary structure, homodimer. FAD is required as a cofactor.

The protein localises to the cytoplasm. The enzyme catalyses [thioredoxin]-dithiol + NADP(+) = [thioredoxin]-disulfide + NADPH + H(+). The protein is Thioredoxin reductase (trxB) of Escherichia coli O157:H7.